A 962-amino-acid chain; its full sequence is MADRTPKRSADGLIHDAKPSKVTKNDRPPVIDFKRILAAKIAEKRGGPPVSAVSLIAASTVSTPAPVTYGSVGLPTRQLSDSDDDDEEDNATAKTHSVPIPVFKPPDQLTAPHTVKRKPTQPPTPTRPVHQAQATQRRPVVSYDTTGRRATTQDEITDAFGELDNELRRLAALTPVPGGWPESTRGERNQMVNPVGVKELPIVVQSITDRAIQIENRLEAQFHGATEMVKTVVPTVSVRGGVFTRHVITDTKRQPFLIEACEFIPSMIQEAPIPFRAVASKPFAAGTKLLTPKAGAPAVDLRAAPVLGKGYFGTVYKVGNLACKVQHGRVMPGVSNAISDVVEESLLGSRLQHPNIITFVKGFLYHGAVNTEAVCVSLWELGLMDLLSFTQQSFWQPGKDACDPLVKRYLARRFEKHTLLGLEHLHERGLMHRDIKSQNIFIFTNRGRLVAKLGDLGCCSKGAFCDAGGTRAYFPPETLAINVQCCASDMWAWGVTMWEVHTGRTPFWGGTDISMQKVFRYTGGFDNRAYNQLAVARHAMAAADSAVKPVPDLEGLMERGKVSLSPSFTDIMKSVLRLNPNDRATASDLLKSPRYTDESLTEGCECTDRKSLEKNAPEMIRLLEHNHLPPQKVIMTTDPHERDQLAEKERWGQVPMEVTGDFRPAPLYMPWLARADMGDDHTAKKLITLTPRDLVSVYPVVATKEYGVKEIRVYRPPEFSPTYDIVYLELKPTIDFEAIQSLMEGIQAIQKSIPYVVPVFHYTLGAHGTKRYMIYVTPAKRSITELNFDGETDDGTLLGAVILKQLISLAVAFRDNGINFITNMYNTHILYHDPRGVDIGPLKLDMVIYMLLHQTNNLNVYKLSSTDRTLRDPGDPVLKTCLAAYTYVKLLMSAPRALERLVPKTTISACKRFDDFFMIPTVKKISIPPDTKIKVPKLFSFIKIEPPQDISGGTVYASGTLS.

2 disordered regions span residues 1–28 (MADRTPKRSADGLIHDAKPSKVTKNDRP) and 62–152 (STPA…RATT). Acidic residues predominate over residues 81–90 (DSDDDDEEDN). Over residues 143–152 (YDTTGRRATT) the composition is skewed to polar residues. Residues 301–595 (LRAAPVLGKG…ASDLLKSPRY (295 aa)) form the Protein kinase domain. Residues 307–315 (LGKGYFGTV) and Lys324 contribute to the ATP site. The active-site Proton acceptor is Asp434.

It belongs to the protein kinase superfamily. Ser/Thr protein kinase family.

It carries out the reaction L-seryl-[protein] + ATP = O-phospho-L-seryl-[protein] + ADP + H(+). The enzyme catalyses L-threonyl-[protein] + ATP = O-phospho-L-threonyl-[protein] + ADP + H(+). The polypeptide is Protein kinase ORF73 (ORF73) (Ictaluridae (bullhead catfishes)).